The following is a 124-amino-acid chain: Probable dihydroneopterin aldolase (124 aa).

Residues Glu-23, Tyr-56, and Ile-75 to Glu-76 each bind substrate. Lys-103 (proton donor/acceptor) is an active-site residue.

This sequence belongs to the DHNA family.

The enzyme catalyses 7,8-dihydroneopterin = 6-hydroxymethyl-7,8-dihydropterin + glycolaldehyde. It participates in cofactor biosynthesis; tetrahydrofolate biosynthesis; 2-amino-4-hydroxy-6-hydroxymethyl-7,8-dihydropteridine diphosphate from 7,8-dihydroneopterin triphosphate: step 3/4. Its function is as follows. Catalyzes the conversion of 7,8-dihydroneopterin to 6-hydroxymethyl-7,8-dihydropterin. This is Probable dihydroneopterin aldolase (folB) from Chlamydia trachomatis serovar D (strain ATCC VR-885 / DSM 19411 / UW-3/Cx).